The sequence spans 381 residues: Acetylornithine deacetylase (381 aa).

Histidine 79 contributes to the Zn(2+) binding site. Residue aspartate 81 is part of the active site. Aspartate 111 contributes to the Zn(2+) binding site. Residue glutamate 143 is part of the active site. Glutamate 144, glutamate 168, and histidine 354 together coordinate Zn(2+).

The protein belongs to the peptidase M20A family. ArgE subfamily. As to quaternary structure, homodimer. Zn(2+) is required as a cofactor. Requires Co(2+) as cofactor. The cofactor is glutathione.

The protein resides in the cytoplasm. It catalyses the reaction N(2)-acetyl-L-ornithine + H2O = L-ornithine + acetate. The protein operates within amino-acid biosynthesis; L-arginine biosynthesis; L-ornithine from N(2)-acetyl-L-ornithine (linear): step 1/1. Catalyzes the hydrolysis of the amide bond of N(2)-acetylated L-amino acids. Cleaves the acetyl group from N-acetyl-L-ornithine to form L-ornithine, an intermediate in L-arginine biosynthesis pathway, and a branchpoint in the synthesis of polyamines. In Buchnera aphidicola subsp. Acyrthosiphon pisum (strain APS) (Acyrthosiphon pisum symbiotic bacterium), this protein is Acetylornithine deacetylase.